The primary structure comprises 173 residues: Bifunctional protein PyrR (173 aa).

A PRPP-binding motif is present at residues 93–105 (VILVDDVLYTGRT).

The protein belongs to the purine/pyrimidine phosphoribosyltransferase family. PyrR subfamily. Homodimer and homohexamer; in equilibrium.

The catalysed reaction is UMP + diphosphate = 5-phospho-alpha-D-ribose 1-diphosphate + uracil. In terms of biological role, regulates transcriptional attenuation of the pyrimidine nucleotide (pyr) operon by binding in a uridine-dependent manner to specific sites on pyr mRNA. This disrupts an antiterminator hairpin in the RNA and favors formation of a downstream transcription terminator, leading to a reduced expression of downstream genes. Also displays a weak uracil phosphoribosyltransferase activity which is not physiologically significant. This is Bifunctional protein PyrR from Streptococcus pneumoniae (strain 70585).